The following is a 100-amino-acid chain: MYLSPQEKDKLLVVTAALLAERRLNRGLKLNHPEAVAWLSFQVLEGARDGKSVSTLMNEGTRWLTKEQVMEGVPELIHEVQIEAVFPDGTKLVTLHNPIR.

The protein belongs to the urease gamma subunit family. In terms of assembly, heterotrimer of UreA (gamma), UreB (beta) and UreC (alpha) subunits. Three heterotrimers associate to form the active enzyme.

The protein localises to the cytoplasm. It carries out the reaction urea + 2 H2O + H(+) = hydrogencarbonate + 2 NH4(+). It participates in nitrogen metabolism; urea degradation; CO(2) and NH(3) from urea (urease route): step 1/1. This is Urease subunit gamma from Prochlorococcus marinus (strain NATL1A).